The sequence spans 345 residues: Uroporphyrinogen decarboxylase (345 aa).

Residues 23–27, Asp73, Tyr149, Thr203, and His319 each bind substrate; that span reads RQAGR.

It belongs to the uroporphyrinogen decarboxylase family. As to quaternary structure, homodimer.

The protein localises to the cytoplasm. The catalysed reaction is uroporphyrinogen III + 4 H(+) = coproporphyrinogen III + 4 CO2. Its pathway is porphyrin-containing compound metabolism; protoporphyrin-IX biosynthesis; coproporphyrinogen-III from 5-aminolevulinate: step 4/4. In terms of biological role, catalyzes the decarboxylation of four acetate groups of uroporphyrinogen-III to yield coproporphyrinogen-III. In Vesicomyosocius okutanii subsp. Calyptogena okutanii (strain HA), this protein is Uroporphyrinogen decarboxylase.